The sequence spans 324 residues: NADH-ubiquinone oxidoreductase chain 1 (324 aa).

8 consecutive transmembrane segments (helical) span residues 3 to 23 (LLFM…AVAF), 73 to 93 (LLFI…WTPF), 106 to 126 (ILFI…SGWA), 151 to 171 (ALII…AFAI), 175 to 195 (FTWF…STLA), 226 to 246 (LFFL…TIIF), 255 to 275 (TLTT…FLWV), and 295 to 315 (FLPL…SLLF).

It belongs to the complex I subunit 1 family.

The protein resides in the mitochondrion inner membrane. It carries out the reaction a ubiquinone + NADH + 5 H(+)(in) = a ubiquinol + NAD(+) + 4 H(+)(out). Core subunit of the mitochondrial membrane respiratory chain NADH dehydrogenase (Complex I) that is believed to belong to the minimal assembly required for catalysis. Complex I functions in the transfer of electrons from NADH to the respiratory chain. The immediate electron acceptor for the enzyme is believed to be ubiquinone. The protein is NADH-ubiquinone oxidoreductase chain 1 (MT-ND1) of Aquarana catesbeiana (American bullfrog).